Reading from the N-terminus, the 177-residue chain is Ubiquinol-cytochrome c reductase iron-sulfur subunit (177 aa).

A helical membrane pass occupies residues 18-38; that stretch reads IVLTASSVAAVGAACAFWPII. In terms of domain architecture, Rieske spans 88–175; the sequence is ARAVKMSELI…YIFISDTKIR (88 aa). [2Fe-2S] cluster contacts are provided by Cys120, His122, Cys139, and His142. Cys125 and Cys141 form a disulfide bridge.

Belongs to the Rieske iron-sulfur protein family. The main subunits of complex b-c1 are: cytochrome b, cytochrome c1 and the Rieske protein. The cofactor is [2Fe-2S] cluster.

The protein resides in the cell membrane. It carries out the reaction a quinol + 2 Fe(III)-[cytochrome c](out) = a quinone + 2 Fe(II)-[cytochrome c](out) + 2 H(+)(out). Its function is as follows. Component of the ubiquinol-cytochrome c reductase complex (complex III or cytochrome b-c1 complex), which is a respiratory chain that generates an electrochemical potential coupled to ATP synthesis. The polypeptide is Ubiquinol-cytochrome c reductase iron-sulfur subunit (petA) (Rickettsia typhi (strain ATCC VR-144 / Wilmington)).